A 121-amino-acid chain; its full sequence is Large ribosomal subunit protein uL14 (121 aa).

The protein belongs to the universal ribosomal protein uL14 family. As to quaternary structure, part of the 50S ribosomal subunit. Forms a cluster with proteins L3 and L19. In the 70S ribosome, L14 and L19 interact and together make contacts with the 16S rRNA in bridges B5 and B8.

Functionally, binds to 23S rRNA. Forms part of two intersubunit bridges in the 70S ribosome. In Opitutus terrae (strain DSM 11246 / JCM 15787 / PB90-1), this protein is Large ribosomal subunit protein uL14.